The following is a 152-amino-acid chain: Transcriptional regulator MraZ (152 aa).

SpoVT-AbrB domains are found at residues 5–52 and 81–124; these read LNPI…THPQ and ATEV…GKSQ.

It belongs to the MraZ family. As to quaternary structure, forms oligomers.

It is found in the cytoplasm. It localises to the nucleoid. The chain is Transcriptional regulator MraZ from Coxiella burnetii (strain Dugway 5J108-111).